We begin with the raw amino-acid sequence, 177 residues long: MKIVGDSEHFKQPYDSNDEYVSKTEDKRDCEAAQKVGMELVSLSKTQLDKIELDEHLYDSIQQAHKIKPKTEAYRRHMQYIGKLMRNVDIEPIKASLAVVLNKNSNETAKLQMFEKMRERLLTQGDGEIQTVVEHYPQLDRQKLRTLVRQATKELAKGPESKSSKELFKYLRSEIQD.

The span at 1–12 shows a compositional bias: basic and acidic residues; the sequence is MKIVGDSEHFKQ. The interval 1-26 is disordered; that stretch reads MKIVGDSEHFKQPYDSNDEYVSKTED.

Belongs to the DarP family.

The protein localises to the cytoplasm. Member of a network of 50S ribosomal subunit biogenesis factors which assembles along the 30S-50S interface, preventing incorrect 23S rRNA structures from forming. Promotes peptidyl transferase center (PTC) maturation. This chain is Dual-action ribosomal maturation protein DarP, found in Shewanella oneidensis (strain ATCC 700550 / JCM 31522 / CIP 106686 / LMG 19005 / NCIMB 14063 / MR-1).